A 76-amino-acid chain; its full sequence is Omega-conotoxin-like TeAr94 (76 aa).

The first 22 residues, Met-1–Ala-22, serve as a signal peptide directing secretion. The propeptide occupies Val-23–Asn-50. Cystine bridges form between Cys-53/Cys-67, Cys-60/Cys-71, and Cys-66/Cys-75.

This sequence belongs to the conotoxin O1 superfamily. In terms of tissue distribution, expressed by the venom duct.

The protein resides in the secreted. Omega-conotoxins act at presynaptic membranes, they bind and block voltage-gated calcium channels. The chain is Omega-conotoxin-like TeAr94 from Conus textile (Cloth-of-gold cone).